Here is a 414-residue protein sequence, read N- to C-terminus: Eukaryotic initiation factor 4A-3 (414 aa).

The short motif at 41–69 (ESFDDMGLQENLLRGIYAYGFEKPSAIQQ) is the Q motif element. A Helicase ATP-binding domain is found at 72 to 242 (IVPFCKGLDV…RKFMNKPVRI (171 aa)). Residue 85–92 (AQSGTGKT) coordinates ATP. Residues 190–193 (DEAD) carry the DEAD box motif. The Helicase C-terminal domain maps to 253 to 414 (GIKQFYVNVE…ELPANVADLL (162 aa)).

Belongs to the DEAD box helicase family. eIF4A subfamily. EIF4F is a multi-subunit complex, the composition of which varies with external and internal environmental conditions. It is composed of at least EIF4A, EIF4E and EIF4G. Interacts with DRM2 (via UBA domains).

It localises to the cytoplasm. Its subcellular location is the nucleus. The catalysed reaction is ATP + H2O = ADP + phosphate + H(+). ATP-dependent RNA helicase which is a subunit of the eIF4F complex involved in cap recognition and is required for mRNA binding to ribosome. In the current model of translation initiation, eIF4A unwinds RNA secondary structures in the 5'-UTR of mRNAs which is necessary to allow efficient binding of the small ribosomal subunit, and subsequent scanning for the initiator codon. This chain is Eukaryotic initiation factor 4A-3, found in Oryza sativa subsp. japonica (Rice).